The following is a 453-amino-acid chain: Ribulose bisphosphate carboxylase large chain (453 aa).

The propeptide occupies 1-2; that stretch reads MS. Proline 3 is modified (N-acetylproline). Lysine 14 is modified (N6,N6,N6-trimethyllysine). 2 residues coordinate substrate: asparagine 123 and threonine 173. Lysine 175 acts as the Proton acceptor in catalysis. Residue lysine 177 participates in substrate binding. Mg(2+)-binding residues include lysine 201, aspartate 203, and glutamate 204. At lysine 201 the chain carries N6-carboxylysine. Residue histidine 294 is the Proton acceptor of the active site. The substrate site is built by arginine 295, histidine 327, and serine 379.

Belongs to the RuBisCO large chain family. Type I subfamily. Heterohexadecamer of 8 large chains and 8 small chains; disulfide-linked. The disulfide link is formed within the large subunit homodimers. Mg(2+) is required as a cofactor. Post-translationally, the disulfide bond which can form in the large chain dimeric partners within the hexadecamer appears to be associated with oxidative stress and protein turnover.

It is found in the plastid. It localises to the chloroplast. The catalysed reaction is 2 (2R)-3-phosphoglycerate + 2 H(+) = D-ribulose 1,5-bisphosphate + CO2 + H2O. It catalyses the reaction D-ribulose 1,5-bisphosphate + O2 = 2-phosphoglycolate + (2R)-3-phosphoglycerate + 2 H(+). Functionally, ruBisCO catalyzes two reactions: the carboxylation of D-ribulose 1,5-bisphosphate, the primary event in carbon dioxide fixation, as well as the oxidative fragmentation of the pentose substrate in the photorespiration process. Both reactions occur simultaneously and in competition at the same active site. The chain is Ribulose bisphosphate carboxylase large chain from Galium corsicum.